A 312-amino-acid chain; its full sequence is Ribosomal protein L11 methyltransferase (312 aa).

Positions 162, 183, 205, and 248 each coordinate S-adenosyl-L-methionine.

It belongs to the methyltransferase superfamily. PrmA family.

The protein resides in the cytoplasm. The enzyme catalyses L-lysyl-[protein] + 3 S-adenosyl-L-methionine = N(6),N(6),N(6)-trimethyl-L-lysyl-[protein] + 3 S-adenosyl-L-homocysteine + 3 H(+). Its function is as follows. Methylates ribosomal protein L11. The protein is Ribosomal protein L11 methyltransferase of Bacillus cytotoxicus (strain DSM 22905 / CIP 110041 / 391-98 / NVH 391-98).